The following is a 405-amino-acid chain: Solute carrier family 35 member E2B (405 aa).

The tract at residues 1 to 28 is disordered; sequence MSSSVKTPALEELVPGSEEKPKGRSPLS. 10 helical membrane passes run 81–101, 106–126, 142–162, 167–187, 195–215, 219–241, 264–284, 296–316, 326–346, and 347–367; these read LWFFFSFCTLFLNKYILSLLG, MLGAVQMLSTTVIGCVKTLVP, FLMTMLFVGLMRFATVVLGLV, VAVSFAETVKSSAPIFTVIMS, TGLLVNLSLIPVMGGLALCTA, SFNVLGFSAALSTNIMDCLQNVF, AAAVAMLVPARVFFTDVPVIG, VVLLLLTDGVLFHLQSVTAYA, FSVASTVKHALSIWLSVIVFG, and NKITSLSAVGTALVTVGVLLY. The segment at 380-405 is disordered; it reads SLAAATGRAPDDTVEPLLPQDPRQHP.

It belongs to the TPT transporter family. SLC35E subfamily.

The protein resides in the membrane. Putative transporter. The polypeptide is Solute carrier family 35 member E2B (SLC35E2B) (Homo sapiens (Human)).